Consider the following 421-residue polypeptide: Probable G-protein coupled receptor 151 (421 aa).

The Extracellular segment spans residues 1 to 44 (MGKATLAVFADSDSSNMNESFAHLHFAGGYLPSDSKGWRTIIPS). A glycan (N-linked (GlcNAc...) asparagine) is linked at Asn18. Residues 45 to 65 (LLAAVCLVGFVGNLCVIGLLL) form a helical membrane-spanning segment. The Cytoplasmic portion of the chain corresponds to 66–74 (HGVWKRKPS). The helical transmembrane segment at 75-95 (MIHSLILNLSLADISLLLFSA) threads the bilayer. Residues 96-122 (PVRATAYVKGVWDLGWFVCKSSDWFTH) are Extracellular-facing. Cys114 and Cys190 are joined by a disulfide. A helical transmembrane segment spans residues 123–143 (MCMAAKSLTFVVVAKVCFMYA). Residues 144 to 156 (SDPAKPVGTHNCT) are Cytoplasmic-facing. A helical membrane pass occupies residues 157–177 (IWSLLGAIWVVASLLPLPEWF). At 178 to 204 (FSTTRHHAGVEMCLVDVPAVAAEFMSL) the chain is on the extracellular side. Residues 205–225 (FGKLYPLLVFCLPLLLAGFYF) form a helical membrane-spanning segment. The Cytoplasmic segment spans residues 226 to 258 (WRAYNQCKIRCAKTQNLRNQMRSKQLTVMLLST). Residues 259 to 279 (AVTSALLWLPEWIAWLWVWHL) form a helical membrane-spanning segment. At 280–289 (KAGGPMPPQG) the chain is on the extracellular side. Residues 290–310 (FIALSQVLMFSISTVNPLIFL) form a helical membrane-spanning segment. The Cytoplasmic portion of the chain corresponds to 311 to 421 (MMSEEFKAGL…HEGQETKGCN (111 aa)). Disordered stretches follow at residues 346–381 (IETL…TDKV) and 394–421 (HERD…KGCN). Composition is skewed to basic and acidic residues over residues 364 to 379 (DTDR…ETTD) and 409 to 421 (PWEH…KGCN).

The protein belongs to the G-protein coupled receptor 1 family. In terms of tissue distribution, exclusively expressed in neurons of the habenular complex. The expression is particularly prominent in the medial habenular nucleus, whereas the lateral habenular nucleus exhibited a lower level of expression.

It is found in the cell membrane. Functionally, orphan receptor. This Rattus norvegicus (Rat) protein is Probable G-protein coupled receptor 151 (Gpr151).